A 194-amino-acid chain; its full sequence is PRELI domain containing protein 3B (194 aa).

The PRELI/MSF1 domain occupies Met-1 to Glu-172. Residues Ser-46 and Ser-51 each carry the phosphoserine modification.

Belongs to the slowmo family.

This is PRELI domain containing protein 3B (PRELID3B) from Homo sapiens (Human).